A 363-amino-acid chain; its full sequence is MDLNEKIINILSSVGLTKNLSIFILDLIPILIILLGATLGVLVIVWLERKISAAVQQRIGPEYAGPLGMIQALADGLKLVLKEDIIPAKGDPWLFSVGPALVVVPVFLSYLVVPFGHELILANLGVGILFWIALSSIAPLGLLMAGYGSNNKYSFLGGLRAAAQAISYEIPLALCVLSVALLSHSLSTVDIVEEQSKYGILGWNIWRQPIGFIAFLIASLAECERLPFDLPEAEEELVAGYQTEYCGIKFGLFYVGSYLNLLVSALFVSVLYLGGWNFSLPWINFPILLTENDFALSLNIVNATLGIAITLGKAYLFLFLSILARWTLPRVRMDQLLDLGWKFLLPVSLGNLLLTASLQLALL.

Transmembrane regions (helical) follow at residues 27–47 (LIPI…IVWL), 93–113 (WLFS…YLVV), 124–144 (LGVG…GLLM), 162–182 (AAQA…VALL), 200–220 (ILGW…IASL), 250–270 (FGLF…FVSV), 303–323 (ATLG…LSIL), and 343–363 (FLLP…LALL).

Belongs to the complex I subunit 1 family. As to quaternary structure, NDH is composed of at least 16 different subunits, 5 of which are encoded in the nucleus.

It localises to the plastid. The protein resides in the chloroplast thylakoid membrane. It catalyses the reaction a plastoquinone + NADH + (n+1) H(+)(in) = a plastoquinol + NAD(+) + n H(+)(out). The catalysed reaction is a plastoquinone + NADPH + (n+1) H(+)(in) = a plastoquinol + NADP(+) + n H(+)(out). Functionally, NDH shuttles electrons from NAD(P)H:plastoquinone, via FMN and iron-sulfur (Fe-S) centers, to quinones in the photosynthetic chain and possibly in a chloroplast respiratory chain. The immediate electron acceptor for the enzyme in this species is believed to be plastoquinone. Couples the redox reaction to proton translocation, and thus conserves the redox energy in a proton gradient. This chain is NAD(P)H-quinone oxidoreductase subunit 1, chloroplastic, found in Chaetosphaeridium globosum (Charophycean green alga).